A 316-amino-acid polypeptide reads, in one-letter code: SHC-transforming protein homolog 1 (316 aa).

The PID domain occupies 16–158; that stretch reads GVSLSATYLG…LIDVLTTAIN (143 aa). The region spanning 211 to 307 is the SH2 domain; sequence WYHGNLSRED…ETSLNLIRPV (97 aa). Residues 292–316 are disordered; it reads SEGRDRETSLNLIRPVPCPGSDDIE.

As to quaternary structure, interacts (via PID domain) with daf-2 (via cytoplasmic domain). Interacts with mek-1; the interaction is independent of mek-1 catalytic activity and is constitutive. Interacts (via N-terminus) with mlk-1 (via NPQY motif when phosphorylated on tyrosine residue). Does not interact with jkk-1 or sek-1. Interacts (via SH2 domain) with svh-2. Interacts with svh-4. Expressed in hypodermis, intestine, head and tail neurons, pharynx, gonads, vulva and body muscles.

The protein localises to the cytoplasm. It localises to the nucleus. It is found in the cell membrane. Functionally, scaffold protein which plays an important role in the activation of the JNK pathway composed of mlk-1, mek-1 and kgb-1; by bringing together mek-1 and mlk-1, promotes mlk-1-mediated phosphorylation and activation of mek-1 which in turn phosphorylates kgb-1. In addition, negatively modulates the activation of the insulin/IGF-1-like signaling (IIS) probably by inhibiting the insulin receptor daf-2. Positively regulates the activity of the transcription factor daf-16/FOXO by both inhibiting IIS and activating the JNK pathway. Plays a role in maintaining gonadal basement membrane integrity through activation of the JNK pathway components mek-1 and jnk-1. Involved in the response to several environmental stresses including heavy metal ions (Cu(2+) and Cd(2+)), heat, oxidative and protein misfolding (ER) stresses. Plays a role in gonad and germline development following the L1 diapause. Plays a role in life span and egg laying. Plays a role in axon regeneration after injury. The protein is SHC-transforming protein homolog 1 of Caenorhabditis elegans.